A 137-amino-acid polypeptide reads, in one-letter code: uncharacterized protein (137 aa).

It to E.coli YfdK.

This is an uncharacterized protein from Escherichia coli (strain K12).